We begin with the raw amino-acid sequence, 274 residues long: 2,3,4,5-tetrahydropyridine-2,6-dicarboxylate N-succinyltransferase (274 aa).

Substrate-binding residues include arginine 104 and aspartate 141.

The protein belongs to the transferase hexapeptide repeat family. In terms of assembly, homotrimer.

It is found in the cytoplasm. It catalyses the reaction (S)-2,3,4,5-tetrahydrodipicolinate + succinyl-CoA + H2O = (S)-2-succinylamino-6-oxoheptanedioate + CoA. It functions in the pathway amino-acid biosynthesis; L-lysine biosynthesis via DAP pathway; LL-2,6-diaminopimelate from (S)-tetrahydrodipicolinate (succinylase route): step 1/3. This is 2,3,4,5-tetrahydropyridine-2,6-dicarboxylate N-succinyltransferase from Shewanella loihica (strain ATCC BAA-1088 / PV-4).